A 181-amino-acid polypeptide reads, in one-letter code: Shikimate kinase (181 aa).

17–22 provides a ligand contact to ATP; that stretch reads GAGKTT. T21 serves as a coordination point for Mg(2+). 3 residues coordinate substrate: D39, R63, and G85. Position 122 (R122) interacts with ATP. R141 provides a ligand contact to substrate.

The protein belongs to the shikimate kinase family. As to quaternary structure, monomer. Mg(2+) serves as cofactor.

Its subcellular location is the cytoplasm. It carries out the reaction shikimate + ATP = 3-phosphoshikimate + ADP + H(+). It functions in the pathway metabolic intermediate biosynthesis; chorismate biosynthesis; chorismate from D-erythrose 4-phosphate and phosphoenolpyruvate: step 5/7. In terms of biological role, catalyzes the specific phosphorylation of the 3-hydroxyl group of shikimic acid using ATP as a cosubstrate. The chain is Shikimate kinase from Nostoc sp. (strain PCC 7120 / SAG 25.82 / UTEX 2576).